An 89-amino-acid polypeptide reads, in one-letter code: UPF0147 protein YN1551_1489 (89 aa).

The protein belongs to the UPF0147 family.

This chain is UPF0147 protein YN1551_1489, found in Saccharolobus islandicus (strain Y.N.15.51 / Yellowstone #2) (Sulfolobus islandicus).